The following is a 181-amino-acid chain: Inner membrane-spanning protein YciB (181 aa).

A run of 5 helical transmembrane segments spans residues 3–23, 54–74, 81–101, 119–139, and 149–169; these read LLFD…FGIY, SLAI…PWFI, IYWL…KPLI, LNLA…YVAY, and FKLF…AFYL.

It belongs to the YciB family.

It localises to the cell inner membrane. In terms of biological role, plays a role in cell envelope biogenesis, maintenance of cell envelope integrity and membrane homeostasis. The sequence is that of Inner membrane-spanning protein YciB from Legionella pneumophila subsp. pneumophila (strain Philadelphia 1 / ATCC 33152 / DSM 7513).